The following is a 125-amino-acid chain: Acidic phospholipase A2 HTe (125 aa).

Cystine bridges form between C11–C77, C27–C124, C29–C45, C44–C105, C51–C98, C61–C91, and C84–C96. Ca(2+)-binding residues include Y28, G30, and G32. H48 is an active-site residue. A Ca(2+)-binding site is contributed by D49. D99 is a catalytic residue.

This sequence belongs to the phospholipase A2 family. Group I subfamily. D49 sub-subfamily. It depends on Ca(2+) as a cofactor. Post-translationally, no glycosylation was detected on this protein. In terms of tissue distribution, expressed by the venom gland.

The protein resides in the secreted. It carries out the reaction a 1,2-diacyl-sn-glycero-3-phosphocholine + H2O = a 1-acyl-sn-glycero-3-phosphocholine + a fatty acid + H(+). Its function is as follows. Snake venom phospholipase A2 (PLA2) that blocks neuromuscular transmission, but that does not produce blockade by virtue of a selective action on nerve endings. Instead, the toxin acts both on nerve and on muscle. PLA2 catalyzes the calcium-dependent hydrolysis of the 2-acyl groups in 3-sn-phosphoglycerides. The polypeptide is Acidic phospholipase A2 HTe (Notechis scutatus scutatus (Mainland tiger snake)).